Here is a 589-residue protein sequence, read N- to C-terminus: Enhancer of polycomb-like protein 1 (589 aa).

Disordered regions lie at residues 298-339, 403-430, 468-497, and 516-589; these read GDED…RPAE, MTPPASASSGSMDEPTPMDLDKPKPNPP, LPSPARDLSEEQSDRWKYDQSSDDEDDAPV, and LQTV…QPVS. Residues 474-487 show a composition bias toward basic and acidic residues; that stretch reads DLSEEQSDRWKYDQ. The span at 557-566 shows a compositional bias: low complexity; it reads PQPNQSQSLP. Residues 567 to 589 are compositionally biased toward pro residues; it reads LPQPQQPVAQPQPQPQPQAQPVS.

The protein belongs to the enhancer of polycomb family. As to quaternary structure, component of the NuA4 histone acetyltransferase complex.

Its subcellular location is the nucleus. Its function is as follows. Component of the NuA4 histone acetyltransferase complex which is involved in transcriptional activation of selected genes principally by acetylation of nucleosomal histone H4 and H2A. The NuA4 complex is also involved in DNA repair. Involved in gene silencing by neighboring heterochromatin, blockage of the silencing spreading along the chromosome, and required for cell cycle progression through G2/M. The polypeptide is Enhancer of polycomb-like protein 1 (epl-1) (Neurospora crassa (strain ATCC 24698 / 74-OR23-1A / CBS 708.71 / DSM 1257 / FGSC 987)).